Here is a 1220-residue protein sequence, read N- to C-terminus: Plasma membrane calcium-transporting ATPase 1 (1220 aa).

N-acetylglycine is present on glycine 2. The Cytoplasmic segment spans residues 2-105 (GDMANNSVAY…KTFLQLVWEA (104 aa)). Phosphoserine is present on residues serine 8 and serine 17. Residues 106 to 126 (LQDVTLIILEIAAIVSLGLSF) traverse the membrane as a helical segment. At 127–154 (YQPPEGDNALCGEVSVGEEEGEGETGWI) the chain is on the extracellular side. Residues 155–175 (EGAAILLSVVCVVLVTAFNDW) form a helical membrane-spanning segment. Residues 176-366 (SKEKQFRGLQ…KEKSVLQGKL (191 aa)) lie on the Cytoplasmic side of the membrane. The disordered stretch occupies residues 297-356 (EEEKKDEKKKEKKNKKQDGAIENRNKAKAQDGAAMEMQPLKSEEGGDGDEKDKKKANLPK). Basic and acidic residues-rich tracts occupy residues 312 to 325 (KQDG…KAKA) and 337 to 356 (KSEE…NLPK). Serine 338 carries the post-translational modification Phosphoserine. Residues 367–386 (TKLAVQIGKAGLLMSAITVI) traverse the membrane as a helical segment. The Extracellular segment spans residues 387-418 (ILVLYFVIDTFWVQKRPWLAECTPIYIQYFVK). Residues 419-439 (FFIIGVTVLVVAVPEGLPLAV) traverse the membrane as a helical segment. Topologically, residues 440–855 (TISLAYSVKK…RNVYDSISKF (416 aa)) are cytoplasmic. Aspartate 475 (4-aspartylphosphate intermediate) is an active-site residue. Residues aspartate 475, threonine 477, and aspartate 797 each contribute to the Mg(2+) site. A helical transmembrane segment spans residues 856–876 (LQFQLTVNVVAVIVAFTGACI). The Extracellular segment spans residues 877–882 (TQDSPL). A helical transmembrane segment spans residues 883–903 (KAVQMLWVNLIMDTLASLALA). The Cytoplasmic portion of the chain corresponds to 904-927 (TEPPTESLLLRKPYGRNKPLISRT). The helical transmembrane segment at 928–948 (MMKNILGHAFYQLVVVFTLLF) threads the bilayer. Over 949–971 (AGEKFFDIDSGRNAPLHAPPSEH) the chain is Extracellular. Residues 972–991 (YTIVFNTFVLMQLFNEINAR) form a helical membrane-spanning segment. The Cytoplasmic portion of the chain corresponds to 992–1005 (KIHGERNVFEGIFN). The helical transmembrane segment at 1006 to 1027 (NAIFCTIVLGTFVVQIIIVQFG) threads the bilayer. The Extracellular portion of the chain corresponds to 1028–1039 (GKPFSCSELSIE). A helical membrane pass occupies residues 1040-1060 (QWLWSIFLGMGTLLWGQLIST). Topologically, residues 1061 to 1220 (IPTSRLKFLK…SPLHSLETSL (160 aa)) are cytoplasmic. A calmodulin-binding subdomain A region spans residues 1100-1117 (LRRGQILWFRGLNRIQTQ). Position 1116 is a phosphothreonine; by PKC (threonine 1116). Positions 1118-1220 (IRVVNAFRSS…SPLHSLETSL (103 aa)) are required for basolateral membrane targeting. Phosphoserine occurs at positions 1140 and 1155. The interval 1160–1220 (PLIDDTDAED…SPLHSLETSL (61 aa)) is disordered. Phosphothreonine is present on threonine 1165. Phosphoserine is present on residues serine 1178 and serine 1182. A compositionally biased stretch (polar residues) spans 1200–1220 (MNKSATSSSPGSPLHSLETSL).

The protein belongs to the cation transport ATPase (P-type) (TC 3.A.3) family. Type IIB subfamily. In terms of assembly, monomer. Dimer. Oligomer. Calmodulin binding. Interacts with PDZD11. Interacts with SLC35G1 and STIM1. Interacts with YWHAE; interacts with the monomeric and dimeric forms of the YWHAE but prefer the monomer form; this interaction inhibits calcium-transporting ATPase activity. Interacts with NPTN; this interaction stabilizes ATP2B1 and increases ATPase activity; this interaction controls T cell calcium homeostasis following T cell activation. Interacts with EPB41; regulates small intestinal calcium absorption through regulation of membrane expression of ATP2B1. Expressed in the retina, with strongest expression in the outer plexiform layer and lower expression levels in the inner nuclear layer and the inner plexiform layer. Specifically expressed in the following retinal cell types: photoreceptor cells, cone bipolar cells and horizontal cells. Expressed in osteoclasts (at protein level). Expressed at highest levels in brain, intestine, kidney, and stomach, and at lower levels in liver, lung, aorta, portal vein, urinary bladder, diaphragm, seminal vesicles and testes. Expressed in small intestinal epithelium.

The protein localises to the cell membrane. It is found in the basolateral cell membrane. Its subcellular location is the synapse. The protein resides in the presynaptic cell membrane. It localises to the cytoplasmic vesicle. The protein localises to the secretory vesicle. It is found in the synaptic vesicle membrane. It catalyses the reaction Ca(2+)(in) + ATP + H2O = Ca(2+)(out) + ADP + phosphate + H(+). In terms of biological role, catalyzes the hydrolysis of ATP coupled with the transport of calcium from the cytoplasm to the extracellular space thereby maintaining intracellular calcium homeostasis. Plays a role in blood pressure regulation through regulation of intracellular calcium concentration and nitric oxide production leading to regulation of vascular smooth muscle cells vasoconstriction. Positively regulates bone mineralization through absorption of calcium from the intestine. Plays dual roles in osteoclast differentiation and survival by regulating RANKL-induced calcium oscillations in preosteoclasts and mediating calcium extrusion in mature osteoclasts. Regulates insulin sensitivity through calcium/calmodulin signaling pathway by regulating AKT1 activation and NOS3 activation in endothelial cells. May play a role in synaptic transmission by modulating calcium and proton dynamics at the synaptic vesicles. This is Plasma membrane calcium-transporting ATPase 1 from Mus musculus (Mouse).